A 120-amino-acid chain; its full sequence is ESAT-6-like protein EsxQ (120 aa).

This sequence belongs to the WXG100 family. ESAT-6 subfamily.

It localises to the secreted. The polypeptide is ESAT-6-like protein EsxQ (Mycobacterium bovis (strain ATCC BAA-935 / AF2122/97)).